Consider the following 942-residue polypeptide: Isoleucine--tRNA ligase (942 aa).

The 'HIGH' region motif lies at 58 to 68; the sequence is PYANGDIHLGH. Residue glutamate 567 coordinates L-isoleucyl-5'-AMP. The 'KMSKS' region motif lies at 608-612; sequence KMSKS. Lysine 611 lines the ATP pocket. Zn(2+) is bound by residues cysteine 905, cysteine 908, cysteine 925, and cysteine 928.

This sequence belongs to the class-I aminoacyl-tRNA synthetase family. IleS type 1 subfamily. Monomer. Zn(2+) is required as a cofactor.

It is found in the cytoplasm. The catalysed reaction is tRNA(Ile) + L-isoleucine + ATP = L-isoleucyl-tRNA(Ile) + AMP + diphosphate. In terms of biological role, catalyzes the attachment of isoleucine to tRNA(Ile). As IleRS can inadvertently accommodate and process structurally similar amino acids such as valine, to avoid such errors it has two additional distinct tRNA(Ile)-dependent editing activities. One activity is designated as 'pretransfer' editing and involves the hydrolysis of activated Val-AMP. The other activity is designated 'posttransfer' editing and involves deacylation of mischarged Val-tRNA(Ile). The protein is Isoleucine--tRNA ligase of Pseudoalteromonas translucida (strain TAC 125).